The following is a 682-amino-acid chain: MSRKQLALLEPALVRQALMDAVKKLSPRVQWHNPVMFIVWIGSVVTTALAVAMATGHLAGDAGFTGTISVWLWFTVLFANVAEALAEGRSKAQANSLKGINKTAFARKLREPKYGAQMDHVPADELRKGDVVLVEAGDIIPCDGEVIEGGASVDESAITGESAPVIRESGGDFASVTGGTRILSDWLVVQCSVNPGETFLDRMIAMVEGAQRRKTPNEIALTILLVALTIVFLLATATLWPFSAYGGTAVSVTVLVALLVCLIPTTIGGLLSAIGVAGMSRMLGANVIATSGRAVEAAGDVDVLLLDKTGTITLGNRQASEFLPAPGVDEKTLADAAQLSSLADETPEGRSIVILAKQRFNLRQRDVQSLQATFVPFTAQTRMSGINIQDRMIRKGSVDAIRRHIEANNGHFPPEVDRLVENVARQGATPLVVAEGATVLGVIALKDIVKGGIKERFAQLRKMGIKTVMITGDNRLTAAAIAAEAGVDDFLSEATPEAKLALIRQYQAEGRLVAMTGDGTNDAPALAQADVAVAMNSGTQAAKEAGNMVDLDSNPTKLIEVVHIGKQMLMTRGSLTTFSIANDVAKYFAIIPAAFAATYPQLNALNVMHLHSPASAILSAVIFNALIIVFLIPLALKGVSYKPLTAAAMLRRNLWIYGLGGLVVPFIGIKIIDMLLTVFGLV.

A run of 4 helical transmembrane segments spans residues 34-54, 62-82, 219-239, and 254-274; these read PVMF…VAMA, AGFT…ANVA, IALT…TATL, and VLVA…LSAI. The 4-aspartylphosphate intermediate role is filled by Asp307. Residues Asp344, Glu348, 377–384, and Lys395 contribute to the ATP site; that span reads FTAQTRMS. Asp518 and Asp522 together coordinate Mg(2+). 3 helical membrane-spanning segments follow: residues 588-608, 616-636, and 662-682; these read FAII…LNVM, AILS…PLAL, and LVVP…FGLV.

The protein belongs to the cation transport ATPase (P-type) (TC 3.A.3) family. Type IA subfamily. In terms of assembly, the system is composed of three essential subunits: KdpA, KdpB and KdpC.

Its subcellular location is the cell inner membrane. The enzyme catalyses K(+)(out) + ATP + H2O = K(+)(in) + ADP + phosphate + H(+). Functionally, part of the high-affinity ATP-driven potassium transport (or Kdp) system, which catalyzes the hydrolysis of ATP coupled with the electrogenic transport of potassium into the cytoplasm. This subunit is responsible for energy coupling to the transport system and for the release of the potassium ions to the cytoplasm. This Enterobacter sp. (strain 638) protein is Potassium-transporting ATPase ATP-binding subunit.